A 206-amino-acid polypeptide reads, in one-letter code: MLVLIPFKPVNPKTRLSKVMRKNERENFARCMLLDVLDALSSFDCDIKIISTHPFKIESYDVVVDSRELDDAINSRIEGETAVIMSDIPLINSRILRRFFESEGDVVIAPGRKGGTNMIIIRDRKFKVRYYYCSFLRHLEFAKSLDLKCTVFDSFYASVDIDTPDDLLELMIHGEGKKSYEFLYSIGFRIKYEKEPKLVRISNTFP.

This sequence belongs to the CofC family. In terms of assembly, homodimer.

It carries out the reaction (2S)-2-phospholactate + GTP + H(+) = (2S)-lactyl-2-diphospho-5'-guanosine + diphosphate. It functions in the pathway cofactor biosynthesis; coenzyme F420 biosynthesis. Guanylyltransferase that catalyzes the activation of (2S)-2-phospholactate (2-PL) as (2S)-lactyl-2-diphospho-5'-guanosine, via the condensation of 2-PL with GTP. It is involved in the biosynthesis of coenzyme F420, a hydride carrier cofactor. In Archaeoglobus profundus (strain DSM 5631 / JCM 9629 / NBRC 100127 / Av18), this protein is 2-phospho-L-lactate guanylyltransferase.